The following is a 250-amino-acid chain: DNA polymerase sliding clamp (250 aa).

It belongs to the PCNA family. As to quaternary structure, homotrimer. The subunits circularize to form a toroid; DNA passes through its center. Replication factor C (RFC) is required to load the toroid on the DNA.

Its function is as follows. Sliding clamp subunit that acts as a moving platform for DNA processing. Responsible for tethering the catalytic subunit of DNA polymerase and other proteins to DNA during high-speed replication. The protein is DNA polymerase sliding clamp of Methanococcus maripaludis (strain DSM 14266 / JCM 13030 / NBRC 101832 / S2 / LL).